A 169-amino-acid chain; its full sequence is T-cell receptor gamma chain C region DFL12 (169 aa).

Residues 1–136 are c region; sequence PSDKRLDADI…LQFMSTSAYY (136 aa). A helical transmembrane segment spans residues 137–157; sequence TYLLLLLKSVIYLAIISFSLL. Topologically, residues 158 to 169 are cytoplasmic; it reads RRTSVCCNEKRS.

The protein resides in the membrane. In Mus musculus (Mouse), this protein is T-cell receptor gamma chain C region DFL12.